The sequence spans 94 residues: Small ribosomal subunit protein bS18 (94 aa).

Belongs to the bacterial ribosomal protein bS18 family. As to quaternary structure, part of the 30S ribosomal subunit. Forms a tight heterodimer with protein bS6.

Binds as a heterodimer with protein bS6 to the central domain of the 16S rRNA, where it helps stabilize the platform of the 30S subunit. The polypeptide is Small ribosomal subunit protein bS18 (Leptospira biflexa serovar Patoc (strain Patoc 1 / Ames)).